Reading from the N-terminus, the 369-residue chain is Aminomethyltransferase (369 aa).

It belongs to the GcvT family. As to quaternary structure, the glycine cleavage system is composed of four proteins: P, T, L and H.

It catalyses the reaction N(6)-[(R)-S(8)-aminomethyldihydrolipoyl]-L-lysyl-[protein] + (6S)-5,6,7,8-tetrahydrofolate = N(6)-[(R)-dihydrolipoyl]-L-lysyl-[protein] + (6R)-5,10-methylene-5,6,7,8-tetrahydrofolate + NH4(+). Its function is as follows. The glycine cleavage system catalyzes the degradation of glycine. In Xanthomonas oryzae pv. oryzae (strain PXO99A), this protein is Aminomethyltransferase.